The following is a 241-amino-acid chain: Methylthioribulose-1-phosphate dehydratase (241 aa).

C100 is a substrate binding site. H117 and H119 together coordinate Zn(2+). E146 acts as the Proton donor/acceptor in catalysis. H202 is a Zn(2+) binding site.

Belongs to the aldolase class II family. MtnB subfamily. Zn(2+) is required as a cofactor.

Its subcellular location is the cytoplasm. It carries out the reaction 5-(methylsulfanyl)-D-ribulose 1-phosphate = 5-methylsulfanyl-2,3-dioxopentyl phosphate + H2O. It functions in the pathway amino-acid biosynthesis; L-methionine biosynthesis via salvage pathway; L-methionine from S-methyl-5-thio-alpha-D-ribose 1-phosphate: step 2/6. Its function is as follows. Catalyzes the dehydration of methylthioribulose-1-phosphate (MTRu-1-P) into 2,3-diketo-5-methylthiopentyl-1-phosphate (DK-MTP-1-P). The polypeptide is Methylthioribulose-1-phosphate dehydratase (Ajellomyces dermatitidis (strain ER-3 / ATCC MYA-2586) (Blastomyces dermatitidis)).